A 128-amino-acid chain; its full sequence is 3-aminoacrylate deaminase RutC (128 aa).

This sequence belongs to the RutC family.

The catalysed reaction is (Z)-3-aminoacrylate + H2O + H(+) = 3-oxopropanoate + NH4(+). In terms of biological role, involved in pyrimidine catabolism. Catalyzes the deamination of 3-aminoacrylate to malonic semialdehyde, a reaction that can also occur spontaneously. RutC may facilitate the reaction and modulate the metabolic fitness, rather than catalyzing essential functions. The chain is 3-aminoacrylate deaminase RutC from Pantoea ananatis (strain LMG 20103).